The following is a 454-amino-acid chain: Alpha-1,3-mannosyl-glycoprotein 4-beta-N-acetylglucosaminyltransferase C (454 aa).

Topologically, residues Met-1–Lys-6 are cytoplasmic. A helical; Signal-anchor for type II membrane protein transmembrane segment spans residues Lys-7–Tyr-24. Over Met-25 to Ile-454 the chain is Lumenal. Asn-58 and Asn-189 each carry an N-linked (GlcNAc...) asparagine glycan.

The protein belongs to the glycosyltransferase 54 family. A divalent metal cation serves as cofactor.

Its subcellular location is the golgi apparatus membrane. It carries out the reaction N(4)-{beta-D-GlcNAc-(1-&gt;2)-alpha-D-Man-(1-&gt;3)-[beta-D-GlcNAc-(1-&gt;2)-alpha-D-Man-(1-&gt;6)]-beta-D-Man-(1-&gt;4)-beta-D-GlcNAc-(1-&gt;4)-beta-D-GlcNAc}-L-asparaginyl-[protein] + UDP-N-acetyl-alpha-D-glucosamine = N(4)-{beta-D-GlcNAc-(1-&gt;2)-[beta-D-GlcNAc-(1-&gt;4)]-alpha-D-Man-(1-&gt;3)-[beta-D-GlcNAc-(1-&gt;2)-alpha-D-Man-(1-&gt;6)]-beta-D-Man-(1-&gt;4)-beta-D-GlcNAc-(1-&gt;4)-beta-D-GlcNAc}-L-asparaginyl-[protein] + UDP + H(+). The protein operates within protein modification; protein glycosylation. Functionally, glycosyltransferase that participates in the transfer of N-acetylglucosamine (GlcNAc) to the core mannose residues of N-linked glycans. Catalyzes the formation of the GlcNAcbeta1-4 branch on the GlcNAcbeta1-2Manalpha1-3 arm of the core structure of N-linked glycans. This Danio rerio (Zebrafish) protein is Alpha-1,3-mannosyl-glycoprotein 4-beta-N-acetylglucosaminyltransferase C (mgat4c).